The chain runs to 235 residues: Protein RESISTANCE TO PHYTOPHTHORA 1, chloroplastic (235 aa).

A chloroplast-targeting transit peptide spans 1–43 (MNSATTMSASVLNYQILKFFPPQKNGFLKSPLIRGKICRFCVS). Residues 53–66 (VIEDPKEETQEKSD) are compositionally biased toward basic and acidic residues. Residues 53-92 (VIEDPKEETQEKSDGVIVNSTEEEEERSGENSTSTGPSTV) form a disordered region. Helical transmembrane passes span 131–151 (FEVQ…NLIF), 158–178 (IWRL…LRAR), 188–208 (LNYL…FLKS), and 211–231 (VVWS…LGWL).

Its subcellular location is the plastid. It is found in the chloroplast. The protein localises to the membrane. Functionally, plays a positive role in the immune response to the oomycetes P.infestans, including induced oxidative burst and enhanced expression of defense-related genes. The protein is Protein RESISTANCE TO PHYTOPHTHORA 1, chloroplastic of Solanum tuberosum (Potato).